The primary structure comprises 1488 residues: Chromosome partition protein MukB (1488 aa).

34-41 (GGNGAGKS) contacts ATP. Coiled-coil stretches lie at residues 326–418 (LEAD…QYNQ), 444–472 (LDTFQAKEQEATEKLLSLEQKMSVAQTAH), and 509–602 (RHLA…QRAP). Positions 666–783 (PGGAEDQRLN…SLPIFGRAAR (118 aa)) are flexible hinge. 3 coiled-coil regions span residues 835–923 (EAEI…AKLE), 977–1116 (EMLS…AKAG), and 1209–1265 (VEAI…LQSV). Positions 1049–1074 (ADSGAEERARQRRDELHAQLSNNRSR) are disordered. Basic and acidic residues predominate over residues 1051 to 1065 (SGAEERARQRRDELH).

It belongs to the SMC family. MukB subfamily. In terms of assembly, homodimerization via its hinge domain. Binds to DNA via its C-terminal region. Interacts, and probably forms a ternary complex, with MukE and MukF via its C-terminal region. The complex formation is stimulated by calcium or magnesium. Interacts with tubulin-related protein FtsZ.

It localises to the cytoplasm. It is found in the nucleoid. In terms of biological role, plays a central role in chromosome condensation, segregation and cell cycle progression. Functions as a homodimer, which is essential for chromosome partition. Involved in negative DNA supercoiling in vivo, and by this means organize and compact chromosomes. May achieve or facilitate chromosome segregation by condensation DNA from both sides of a centrally located replisome during cell division. This chain is Chromosome partition protein MukB, found in Salmonella arizonae (strain ATCC BAA-731 / CDC346-86 / RSK2980).